We begin with the raw amino-acid sequence, 295 residues long: Acetylglutamate kinase (295 aa).

Residues 66 to 67 (GG), Arg-88, and Asn-193 contribute to the substrate site.

This sequence belongs to the acetylglutamate kinase family. ArgB subfamily.

It localises to the cytoplasm. It catalyses the reaction N-acetyl-L-glutamate + ATP = N-acetyl-L-glutamyl 5-phosphate + ADP. Its pathway is amino-acid biosynthesis; L-arginine biosynthesis; N(2)-acetyl-L-ornithine from L-glutamate: step 2/4. Catalyzes the ATP-dependent phosphorylation of N-acetyl-L-glutamate. The protein is Acetylglutamate kinase of Gluconobacter oxydans (strain 621H) (Gluconobacter suboxydans).